The chain runs to 341 residues: Endolytic peptidoglycan transglycosylase RlpA (341 aa).

An N-terminal signal peptide occupies residues 1 to 26; it reads MSKRVRSSLILPAVCGLGLAAVLLSS. Cys27 carries the N-palmitoyl cysteine lipid modification. A lipid anchor (S-diacylglycerol cysteine) is attached at Cys27. The SPOR domain maps to 260–341; the sequence is SLPADGLYLQ…LGQPTLVRPD (82 aa).

Belongs to the RlpA family.

The protein localises to the cell membrane. In terms of biological role, lytic transglycosylase with a strong preference for naked glycan strands that lack stem peptides. Required for efficient separation of daughter cells and maintenance of rod shape. This Pseudomonas aeruginosa (strain UCBPP-PA14) protein is Endolytic peptidoglycan transglycosylase RlpA.